Reading from the N-terminus, the 308-residue chain is Taste receptor type 2 member 43 (308 aa).

Met1 is a topological domain (extracellular). Residues 2–22 (ITFLPIIFSILVVFTFVIGNF) form a helical membrane-spanning segment. Over 23 to 46 (ANGFIALVNSIEWVKRQKISFADQ) the chain is Cytoplasmic. A helical transmembrane segment spans residues 47 to 67 (ILTALAVSRVGLLWILLLNWY). The Extracellular segment spans residues 68 to 86 (STVLNPAFYSVEVRTIAYN). Residues 87 to 107 (LWAVINHFSNWLATSLSIFYL) form a helical membrane-spanning segment. Over 108–126 (LKIANFSNLIFLHLRRRVK) the chain is Cytoplasmic. The helical transmembrane segment at 127-147 (SVVLVILWGPLLFLVCHLFVV) threads the bilayer. The Extracellular portion of the chain corresponds to 148–178 (NMNEIIQTKEYEGNMTWKSKLRSAMYLSNTT). Asn161 and Asn176 each carry an N-linked (GlcNAc...) asparagine glycan. A helical membrane pass occupies residues 179 to 199 (VTILANLVPFILTLISFLLLI). Residues 200 to 229 (CSLCKHLKKMQLRDKGSQDPSTKVHIKALQ) are Cytoplasmic-facing. The helical transmembrane segment at 230–249 (TVISLSLCAIYFLSIMISSW) threads the bilayer. The Extracellular portion of the chain corresponds to 250 to 258 (SLGRVENKA). The chain crosses the membrane as a helical span at residues 259–279 (IFMFCKAIRFSYPSAHAFILI). The Cytoplasmic segment spans residues 280–308 (WGNKKLKQTLLSVLWNVRYCVKGQKLQSP).

It belongs to the G-protein coupled receptor T2R family.

It is found in the membrane. Its subcellular location is the cell projection. The protein localises to the cilium membrane. In terms of biological role, gustducin-coupled receptor immplicated in the perception of bitter compounds in the oral cavity and the gastrointestinal tract. Signals through PLCB2 and the calcium-regulated cation channel TRPM5. Activated by the sulfonyl amide sweeteners saccharin and acesulfame K. In airway epithelial cells, binding of bitter compounds increases the intracellular calcium ion concentration and stimulates ciliary beat frequency. May act as chemosensory receptors in airway epithelial cells to detect and eliminate potential noxious agents from the airways. In Macaca mulatta (Rhesus macaque), this protein is Taste receptor type 2 member 43 (TAS2R43).